A 412-amino-acid polypeptide reads, in one-letter code: Mitochondrial distribution and morphology protein 12 (412 aa).

One can recognise an SMP-LTD domain in the interval 1–410 (MSIDLEWAKL…FPNFHTLVMG (410 aa)). 4 disordered regions span residues 66 to 96 (EDDE…DGYE), 108 to 136 (YTEG…SPTD), 166 to 238 (QGSG…QQEN), and 314 to 354 (PAGD…KPLP). The span at 220–238 (NQPVFPSQQPQQQQPQQEN) shows a compositional bias: low complexity.

This sequence belongs to the MDM12 family. Component of the ER-mitochondria encounter structure (ERMES) or MDM complex, composed of MMM1, MDM10, MDM12 and MDM34. An MMM1 homodimer associates with one molecule of MDM12 on each side in a pairwise head-to-tail manner, and the SMP-LTD domains of MMM1 and MDM12 generate a continuous hydrophobic tunnel for phospholipid trafficking.

The protein resides in the mitochondrion outer membrane. Its subcellular location is the endoplasmic reticulum membrane. In terms of biological role, component of the ERMES/MDM complex, which serves as a molecular tether to connect the endoplasmic reticulum (ER) and mitochondria. Components of this complex are involved in the control of mitochondrial shape and protein biogenesis, and function in nonvesicular lipid trafficking between the ER and mitochondria. MDM12 is required for the interaction of the ER-resident membrane protein MMM1 and the outer mitochondrial membrane-resident beta-barrel protein MDM10. The MDM12-MMM1 subcomplex functions in the major beta-barrel assembly pathway that is responsible for biogenesis of all mitochondrial outer membrane beta-barrel proteins, and acts in a late step after the SAM complex. The MDM10-MDM12-MMM1 subcomplex further acts in the TOM40-specific pathway after the action of the MDM12-MMM1 complex. Essential for establishing and maintaining the structure of mitochondria and maintenance of mtDNA nucleoids. This chain is Mitochondrial distribution and morphology protein 12, found in Coprinopsis cinerea (strain Okayama-7 / 130 / ATCC MYA-4618 / FGSC 9003) (Inky cap fungus).